We begin with the raw amino-acid sequence, 355 residues long: GTP 3',8-cyclase (355 aa).

The region spanning 16–242 (RYGRRATDMR…PDPRARDGAP (227 aa)) is the Radical SAM core domain. Arginine 25 is a GTP binding site. Residues cysteine 32 and cysteine 36 each contribute to the [4Fe-4S] cluster site. Residue tyrosine 38 participates in S-adenosyl-L-methionine binding. A [4Fe-4S] cluster-binding site is contributed by cysteine 39. Arginine 76 serves as a coordination point for GTP. Position 80 (glycine 80) interacts with S-adenosyl-L-methionine. Threonine 107 serves as a coordination point for GTP. Serine 131 provides a ligand contact to S-adenosyl-L-methionine. Lysine 168 is a GTP binding site. Methionine 202 is a binding site for S-adenosyl-L-methionine. The [4Fe-4S] cluster site is built by cysteine 277 and cysteine 280. Residue 282–284 (RTR) participates in GTP binding. Cysteine 294 serves as a coordination point for [4Fe-4S] cluster.

Belongs to the radical SAM superfamily. MoaA family. Monomer. [4Fe-4S] cluster is required as a cofactor.

The enzyme catalyses GTP + AH2 + S-adenosyl-L-methionine = (8S)-3',8-cyclo-7,8-dihydroguanosine 5'-triphosphate + 5'-deoxyadenosine + L-methionine + A + H(+). The protein operates within cofactor biosynthesis; molybdopterin biosynthesis. Catalyzes, together with MoaC, the conversion of 5'-GTP to cyclic pyranopterin monophosphate (cPMP or molybdopterin precursor Z). In terms of biological role, catalyzes the cyclization of GTP to (8S)-3',8-cyclo-7,8-dihydroguanosine 5'-triphosphate. This Paenarthrobacter nicotinovorans (Arthrobacter nicotinovorans) protein is GTP 3',8-cyclase.